We begin with the raw amino-acid sequence, 613 residues long: DBH-like monooxygenase protein 1 (613 aa).

Positions 1-19 (MCCWPLLLLWGLLPGTAAG) are cleaved as a signal peptide. Over 20-592 (GSGRTYPHRT…TSSSSSLHRD (573 aa)) the chain is Lumenal. Positions 35–148 (GKYWLGWSQR…STVRVIWAYH (114 aa)) constitute a DOMON domain. Asn-114 carries an N-linked (GlcNAc...) asparagine glycan. Residue Tyr-203 is part of the active site. Intrachain disulfides connect Cys-205–Cys-257 and Cys-242–Cys-269. 2 residues coordinate Cu cation: His-235 and His-236. A glycan (N-linked (GlcNAc...) asparagine) is linked at Asn-247. The Cu cation site is built by His-307, His-389, His-391, and Met-464. 3 disulfide bridges follow: Cys-364–Cys-480, Cys-368–Cys-550, and Cys-443–Cys-465. His-389 is an active-site residue. Residues Asn-476 and Asn-517 are each glycosylated (N-linked (GlcNAc...) asparagine). A helical membrane pass occupies residues 593–613 (FSINLLVCLLLLSCTLSTKSL).

The protein belongs to the copper type II ascorbate-dependent monooxygenase family. Cu(2+) is required as a cofactor. Post-translationally, N-glycosylated. Highly expressed in lung, kidney, brain and spinal cord.

The protein resides in the endoplasmic reticulum membrane. This Homo sapiens (Human) protein is DBH-like monooxygenase protein 1 (MOXD1).